The following is a 200-amino-acid chain: Protein OPI10 homolog (200 aa).

This sequence belongs to the OPI10 family.

It is found in the cytoplasm. Its subcellular location is the nucleus envelope. This Schizosaccharomyces pombe (strain 972 / ATCC 24843) (Fission yeast) protein is Protein OPI10 homolog.